The following is a 1128-amino-acid chain: Major DNA-binding protein (1128 aa).

Positions 1104 to 1128 are required for nuclear localization; that stretch reads LGGGGQGSGGRRKRRLATVLPGLEV.

The protein belongs to the herpesviridae major DNA-binding protein family. As to quaternary structure, homooligomers. Forms double-helical filaments necessary for the formation of replication compartments within the host nucleus. Interacts with the origin-binding protein. Interacts with the helicase primase complex; this interaction stimulates primer synthesis activity of the helicase-primase complex. Interacts with the DNA polymerase. Interacts with the alkaline exonuclease; this interaction increases its nuclease processivity.

The protein localises to the virion tegument. It localises to the host nucleus. In terms of biological role, plays several crucial roles in viral infection. Participates in the opening of the viral DNA origin to initiate replication by interacting with the origin-binding protein. May disrupt loops, hairpins and other secondary structures present on ssDNA to reduce and eliminate pausing of viral DNA polymerase at specific sites during elongation. Promotes viral DNA recombination by performing strand-transfer, characterized by the ability to transfer a DNA strand from a linear duplex to a complementary single-stranded DNA circle. Can also catalyze the renaturation of complementary single strands. Additionally, reorganizes the host cell nucleus, leading to the formation of prereplicative sites and replication compartments. This process is driven by the protein which can form double-helical filaments in the absence of DNA. The chain is Major DNA-binding protein from Homo sapiens (Human).